Consider the following 340-residue polypeptide: Glycerol-3-phosphate dehydrogenase [NAD(P)+] (340 aa).

Positions 13, 14, and 108 each coordinate NADPH. Residues lysine 108, glycine 139, and serine 141 each coordinate sn-glycerol 3-phosphate. Alanine 143 provides a ligand contact to NADPH. Lysine 194, aspartate 247, serine 257, arginine 258, and asparagine 259 together coordinate sn-glycerol 3-phosphate. The active-site Proton acceptor is the lysine 194. Arginine 258 provides a ligand contact to NADPH. NADPH is bound by residues valine 282 and glutamate 284.

It belongs to the NAD-dependent glycerol-3-phosphate dehydrogenase family.

It localises to the cytoplasm. The enzyme catalyses sn-glycerol 3-phosphate + NAD(+) = dihydroxyacetone phosphate + NADH + H(+). It catalyses the reaction sn-glycerol 3-phosphate + NADP(+) = dihydroxyacetone phosphate + NADPH + H(+). It functions in the pathway membrane lipid metabolism; glycerophospholipid metabolism. Functionally, catalyzes the reduction of the glycolytic intermediate dihydroxyacetone phosphate (DHAP) to sn-glycerol 3-phosphate (G3P), the key precursor for phospholipid synthesis. This chain is Glycerol-3-phosphate dehydrogenase [NAD(P)+], found in Streptococcus thermophilus (strain ATCC BAA-491 / LMD-9).